Reading from the N-terminus, the 223-residue chain is Endonuclease III (223 aa).

The 20-residue stretch at 118–137 (RDFLTAIEGIGDKTADVVLL) folds into the HhH domain. The [4Fe-4S] cluster site is built by Cys-198, Cys-205, Cys-208, and Cys-214.

Belongs to the Nth/MutY family. [4Fe-4S] cluster serves as cofactor.

It carries out the reaction 2'-deoxyribonucleotide-(2'-deoxyribose 5'-phosphate)-2'-deoxyribonucleotide-DNA = a 3'-end 2'-deoxyribonucleotide-(2,3-dehydro-2,3-deoxyribose 5'-phosphate)-DNA + a 5'-end 5'-phospho-2'-deoxyribonucleoside-DNA + H(+). Functionally, probably part of a 4-gene DNA damage response locus in which the upstream ups system, in combination with this downstream locus, functions in homologous recombination to rescue Sulfolobales from DNA-damaging threats. DNA repair enzyme that has both DNA N-glycosylase activity and AP-lyase activity. The DNA N-glycosylase activity releases various damaged pyrimidines from DNA by cleaving the N-glycosidic bond, leaving an AP (apurinic/apyrimidinic) site. The AP-lyase activity cleaves the phosphodiester bond 3' to the AP site by a beta-elimination, leaving a 3'-terminal unsaturated sugar and a product with a terminal 5'-phosphate. Nicks UV-treated plasmid DNA in a dose-dependent manner, has no activity on untreated DNA. In Sulfolobus acidocaldarius (strain ATCC 33909 / DSM 639 / JCM 8929 / NBRC 15157 / NCIMB 11770), this protein is Endonuclease III.